Here is a 512-residue protein sequence, read N- to C-terminus: tRNA-2-methylthio-N(6)-dimethylallyladenosine synthase (512 aa).

A disordered region spans residues 1–22 (MVAHDAAAGVTGEGAGPPVRRA). Positions 25–141 (RTYQVRTYGC…LPTLLERARH (117 aa)) constitute an MTTase N-terminal domain. Positions 34, 70, 104, 178, 182, and 185 each coordinate [4Fe-4S] cluster. One can recognise a Radical SAM core domain in the interval 164 to 400 (RESAYAAWVS…IALQEQISLE (237 aa)). The region spanning 403-471 (RALVGQAVEV…PHHLIADAGV (69 aa)) is the TRAM domain.

This sequence belongs to the methylthiotransferase family. MiaB subfamily. In terms of assembly, monomer. [4Fe-4S] cluster serves as cofactor.

It is found in the cytoplasm. The enzyme catalyses N(6)-dimethylallyladenosine(37) in tRNA + (sulfur carrier)-SH + AH2 + 2 S-adenosyl-L-methionine = 2-methylsulfanyl-N(6)-dimethylallyladenosine(37) in tRNA + (sulfur carrier)-H + 5'-deoxyadenosine + L-methionine + A + S-adenosyl-L-homocysteine + 2 H(+). Functionally, catalyzes the methylthiolation of N6-(dimethylallyl)adenosine (i(6)A), leading to the formation of 2-methylthio-N6-(dimethylallyl)adenosine (ms(2)i(6)A) at position 37 in tRNAs that read codons beginning with uridine. The polypeptide is tRNA-2-methylthio-N(6)-dimethylallyladenosine synthase (Mycobacterium bovis (strain ATCC BAA-935 / AF2122/97)).